A 720-amino-acid chain; its full sequence is Inactive serine protease PAMR1 (720 aa).

The first 21 residues, Met1–Ser21, serve as a signal peptide directing secretion. 8 disulfides stabilise this stretch: Cys128/Cys150, Cys177/Cys199, Cys239/Cys250, Cys244/Cys260, Cys262/Cys271, Cys280/Cys329, Cys315/Cys342, and Cys414/Cys442. In terms of domain architecture, CUB spans Cys128–Ile236. In terms of domain architecture, EGF-like spans Glu235 to Glu272. Sushi domains lie at Arg278 to Lys344 and Ala387 to Pro444. One can recognise a Peptidase S1 domain in the interval Ile445–Lys720. A glycan (N-linked (GlcNAc...) asparagine) is linked at Asn451. Cys489 and Cys505 are oxidised to a cystine. N-linked (GlcNAc...) asparagine glycosylation is present at Asn614. 2 cysteine pairs are disulfide-bonded: Cys630–Cys649 and Cys661–Cys697.

Belongs to the peptidase S1 family.

Its subcellular location is the secreted. May play a role in regeneration of skeletal muscle. In Pongo abelii (Sumatran orangutan), this protein is Inactive serine protease PAMR1 (PAMR1).